The sequence spans 360 residues: UDP-N-acetylglucosamine--N-acetylmuramyl-(pentapeptide) pyrophosphoryl-undecaprenol N-acetylglucosamine transferase (360 aa).

Positions 198 and 289 each coordinate UDP-N-acetyl-alpha-D-glucosamine.

It belongs to the glycosyltransferase 28 family. MurG subfamily.

It is found in the cell membrane. The catalysed reaction is Mur2Ac(oyl-L-Ala-gamma-D-Glu-L-Lys-D-Ala-D-Ala)-di-trans,octa-cis-undecaprenyl diphosphate + UDP-N-acetyl-alpha-D-glucosamine = beta-D-GlcNAc-(1-&gt;4)-Mur2Ac(oyl-L-Ala-gamma-D-Glu-L-Lys-D-Ala-D-Ala)-di-trans,octa-cis-undecaprenyl diphosphate + UDP + H(+). It participates in cell wall biogenesis; peptidoglycan biosynthesis. Functionally, cell wall formation. Catalyzes the transfer of a GlcNAc subunit on undecaprenyl-pyrophosphoryl-MurNAc-pentapeptide (lipid intermediate I) to form undecaprenyl-pyrophosphoryl-MurNAc-(pentapeptide)GlcNAc (lipid intermediate II). The protein is UDP-N-acetylglucosamine--N-acetylmuramyl-(pentapeptide) pyrophosphoryl-undecaprenol N-acetylglucosamine transferase of Streptococcus pyogenes serotype M4 (strain MGAS10750).